The sequence spans 1218 residues: MLTKFETKSNRVKGLSFHPKRPWILASLHSGVIQLWDYRMGTLIDRFDEHEGPVRGVHFHNSQPLFVSGGDDYKIKVWNYKTHRCLFTLLGHLDYIRTVQFHHENPWIVSASDDQTIRIWNWQSRTCISVLTGHNHYVMCASFHPKEDLVVSASLDQTVRVWDIGALKKKSASPADDLMRFSQMNSDLFGGVDAIVKYVLEGHDRGVNWASFHPTLPLIVSGADDRQVKLWRMNETKAWEVDTLRGHMNNVSSVMFHAKQDIIVSNSEDKSIRVWDATKRTGIQTFRREHDRFWILAVHPEINLLAAGHDNGMIVFKLERERPAFALSGDSLFYAKDRFLRYYEYSTQKDSQVIPIRRPGTPSLNQSPRTLSYSPTENAVLICSDLDGGSYELYIIPKDSVGRSDVVQDAKRGTGGSAVFIARNRFAVLEKSTSQVLVKNLKNEVVKKSSLPIPTDAIFYAGTGNLLCRSEDKVVIFDLQQRLVLGELQTPFVRYVVWSNDMESVALLSKHTIIIASKKLVLQCTLHETIRVKSGAWDDNGVFIYTTLNHIKYCLPNGDSGIIRTLDVPIYITKVSGNTIFCLDRDGKNRAITINATEYIFKLALLRKKYDHVMSMIKNSQLCGQAMIAYLQQKGFPEVALHFVEDERIRFNLALESGNISVAVASATEINEKDHWYRLGVEALRQGNSRIVEFAYQQTKNFERLSFLYLITGNLDKLSKLMKIAEVKNNVMGQFHNALYLGDVKERVKILENAGHLPLAYITASVHGLTDIAERLAIELGDNVPSLPEGKTPSLLMPPSPIMCGGDWPLLRVMKGIFEGGLESANRGAVDEEEEDVEGDWGEGLDKFDVDGMENTDIEAILDGAEAGEEEDDEEGGWGLDLDLPPELDTPKASANARSSTFVTPPQGMPVSQIWSQKSSLAAEQAAAGSFDTAMRLLHRQLGIKNFAPLKSMFLDLFSGSHSYLRAFSSSPVVPLAIERGWSESSSPNVRGPPALVFDFSQLEAKLKSGYKATTAGKLSEALRVFLSILQTIPLVVVESRREVDEVKELVIIVKEYVLGLQLELKRREMKDDPVRQQELAAYFTHCKLQTPHLRLAYFSAMTVCYKSKNMATAAHFARSLLDTNPTIESQARTARQVMQAAERNMTDATTLNYDFRNPFVICGSTYVPIYKGQKDVACPYCTARFVPSQEGNICSVCDLAVIGADASGLLCSASQVR.

WD repeat units follow at residues 7-48, 49-88, 91-132, 133-172, 202-241, 246-285, 288-326, and 363-404; these read TKSN…DRFD, EHEGPVRGVHFHNSQPLFVSGGDDYKIKVWNYKTHRCLFT, GHLD…SVLT, GHNHYVMCASFHPKEDLVVSASLDQTVRVWDIGALKKKSA, GHDRGVNWASFHPTLPLIVSGADDRQVKLWRMNETKAWEV, GHMNNVSSVMFHAKQDIIVSNSEDKSIRVWDATKRTGIQT, REHDRFWILAVHPEINLLAAGHDNGMIVFKLERERPAFA, and SLNQ…VGRS. A disordered region spans residues 826–849; it reads NRGAVDEEEEDVEGDWGEGLDKFD. Over residues 831–843 the composition is skewed to acidic residues; the sequence is DEEEEDVEGDWGE.

In terms of assembly, oligomeric complex that consists of at least the alpha, beta, beta', gamma, delta, epsilon and zeta subunits.

The protein localises to the cytoplasm. The protein resides in the golgi apparatus membrane. It localises to the cytoplasmic vesicle. It is found in the COPI-coated vesicle membrane. Its function is as follows. The coatomer is a cytosolic protein complex that binds to dilysine motifs and reversibly associates with Golgi non-clathrin-coated vesicles, which further mediate biosynthetic protein transport from the ER, via the Golgi up to the trans Golgi network. Coatomer complex is required for budding from Golgi membranes, and is essential for the retrograde Golgi-to-ER transport of dilysine-tagged proteins. In Arabidopsis thaliana (Mouse-ear cress), this protein is Coatomer subunit alpha-2.